The primary structure comprises 435 residues: Polyadenylate-binding protein RBP47B (435 aa).

Over residues M1–G15 the composition is skewed to polar residues. Disordered regions lie at residues M1–M41 and Y85–G104. A compositionally biased stretch (low complexity) spans Q29–M41. 3 consecutive RRM domains span residues K108–F188, L202–P281, and A321–S393. A disordered region spans residues R392–R412.

Belongs to the polyadenylate-binding RBP47 family. Interacts with the poly(A) tail of mRNA in nucleus. Expressed at low levels in leaves, stems, flowers, and seedlings.

The protein localises to the nucleus. It is found in the cytoplasmic granule. Its function is as follows. Heterogeneous nuclear ribonucleoprotein (hnRNP)-protein binding the poly(A) tail of mRNA and probably involved in some steps of pre-mRNA maturation. This Arabidopsis thaliana (Mouse-ear cress) protein is Polyadenylate-binding protein RBP47B (RBP47B).